The sequence spans 132 residues: D-ribose pyranase (132 aa).

His20 (proton donor) is an active-site residue. Substrate is bound by residues Asp28, His99, and 121–123 (YSN).

This sequence belongs to the RbsD / FucU family. RbsD subfamily. In terms of assembly, homodecamer.

It localises to the cytoplasm. The catalysed reaction is beta-D-ribopyranose = beta-D-ribofuranose. Its pathway is carbohydrate metabolism; D-ribose degradation; D-ribose 5-phosphate from beta-D-ribopyranose: step 1/2. In terms of biological role, catalyzes the interconversion of beta-pyran and beta-furan forms of D-ribose. This chain is D-ribose pyranase, found in Streptococcus agalactiae serotype III (strain NEM316).